The sequence spans 415 residues: Serine hydroxymethyltransferase (415 aa).

Residues L117 and 121-123 (GHL) contribute to the (6S)-5,6,7,8-tetrahydrofolate site. The residue at position 226 (K226) is an N6-(pyridoxal phosphate)lysine.

This sequence belongs to the SHMT family. As to quaternary structure, homodimer. Pyridoxal 5'-phosphate is required as a cofactor.

It localises to the cytoplasm. It carries out the reaction (6R)-5,10-methylene-5,6,7,8-tetrahydrofolate + glycine + H2O = (6S)-5,6,7,8-tetrahydrofolate + L-serine. It functions in the pathway one-carbon metabolism; tetrahydrofolate interconversion. Its pathway is amino-acid biosynthesis; glycine biosynthesis; glycine from L-serine: step 1/1. Functionally, catalyzes the reversible interconversion of serine and glycine with tetrahydrofolate (THF) serving as the one-carbon carrier. This reaction serves as the major source of one-carbon groups required for the biosynthesis of purines, thymidylate, methionine, and other important biomolecules. Also exhibits THF-independent aldolase activity toward beta-hydroxyamino acids, producing glycine and aldehydes, via a retro-aldol mechanism. This chain is Serine hydroxymethyltransferase, found in Dehalococcoides mccartyi (strain ATCC BAA-2100 / JCM 16839 / KCTC 5957 / BAV1).